Here is a 250-residue protein sequence, read N- to C-terminus: MLDQIIQQKKEEIKSIVLPETCQIERRSFKKALQNPNRFIGLIAEVKKASPSKGLIKEHFVPETIAADYEAAKADALSVLTDTRFFQGRNQFLTDVKQTVSLPVLRKDFIIDSLQVEESFRIGADAILLIGEALEPSELHELYLEAREKGMDVLVEVHDETVLERILQVFQPDILGINNRDLKTFRTSVSQTEKIAQLVPDGCLLVSESGIGSLADLQFVNKHGAQAVLVGESLMREDSQQKAIRGLFGE.

Belongs to the TrpC family.

It carries out the reaction 1-(2-carboxyphenylamino)-1-deoxy-D-ribulose 5-phosphate + H(+) = (1S,2R)-1-C-(indol-3-yl)glycerol 3-phosphate + CO2 + H2O. It participates in amino-acid biosynthesis; L-tryptophan biosynthesis; L-tryptophan from chorismate: step 4/5. This is Indole-3-glycerol phosphate synthase from Bacillus velezensis (strain DSM 23117 / BGSC 10A6 / LMG 26770 / FZB42) (Bacillus amyloliquefaciens subsp. plantarum).